The sequence spans 414 residues: Enolase (414 aa).

Glutamine 162 contacts (2R)-2-phosphoglycerate. The active-site Proton donor is the glutamate 204. Mg(2+)-binding residues include aspartate 239, glutamate 280, and aspartate 307. (2R)-2-phosphoglycerate-binding residues include lysine 332, arginine 361, serine 362, and lysine 383. Lysine 332 functions as the Proton acceptor in the catalytic mechanism.

Belongs to the enolase family. Requires Mg(2+) as cofactor.

It is found in the cytoplasm. Its subcellular location is the secreted. The protein localises to the cell surface. It carries out the reaction (2R)-2-phosphoglycerate = phosphoenolpyruvate + H2O. It functions in the pathway carbohydrate degradation; glycolysis; pyruvate from D-glyceraldehyde 3-phosphate: step 4/5. Its function is as follows. Catalyzes the reversible conversion of 2-phosphoglycerate (2-PG) into phosphoenolpyruvate (PEP). It is essential for the degradation of carbohydrates via glycolysis. This Campylobacter jejuni subsp. doylei (strain ATCC BAA-1458 / RM4099 / 269.97) protein is Enolase.